Here is an 887-residue protein sequence, read N- to C-terminus: Probable alpha/beta-glucosidase agdC (887 aa).

An N-terminal signal peptide occupies residues 1 to 17; it reads MLRSLLLLAPMVGAAVA. N-linked (GlcNAc...) asparagine glycosylation is found at N171, N293, and N373. The active-site Nucleophile is the D422. E425 is an active-site residue. Residues 457–483 form a disordered region; that stretch reads PRPLPGFPDDFQPPAASKRSVAKGSKV. D571 functions as the Proton donor in the catalytic mechanism. N-linked (GlcNAc...) asparagine glycosylation is found at N747 and N879.

Belongs to the glycosyl hydrolase 31 family.

Its subcellular location is the secreted. The enzyme catalyses Hydrolysis of terminal, non-reducing (1-&gt;4)-linked alpha-D-glucose residues with release of alpha-D-glucose.. It catalyses the reaction Hydrolysis of terminal, non-reducing beta-D-glucosyl residues with release of beta-D-glucose.. Its function is as follows. Glucosidase involved in the degradation of cellulosic biomass. Has both alpha- and beta-glucosidase activity. This Aspergillus clavatus (strain ATCC 1007 / CBS 513.65 / DSM 816 / NCTC 3887 / NRRL 1 / QM 1276 / 107) protein is Probable alpha/beta-glucosidase agdC (agdC).